The following is an 82-amino-acid chain: ATP synthase subunit c (82 aa).

Transmembrane regions (helical) follow at residues 5-25 (MSLV…FGAI) and 55-75 (FLII…VIAF).

The protein belongs to the ATPase C chain family. In terms of assembly, F-type ATPases have 2 components, F(1) - the catalytic core - and F(0) - the membrane proton channel. F(1) has five subunits: alpha(3), beta(3), gamma(1), delta(1), epsilon(1). F(0) has three main subunits: a(1), b(2) and c(10-14). The alpha and beta chains form an alternating ring which encloses part of the gamma chain. F(1) is attached to F(0) by a central stalk formed by the gamma and epsilon chains, while a peripheral stalk is formed by the delta and b chains.

Its subcellular location is the cell membrane. F(1)F(0) ATP synthase produces ATP from ADP in the presence of a proton or sodium gradient. F-type ATPases consist of two structural domains, F(1) containing the extramembraneous catalytic core and F(0) containing the membrane proton channel, linked together by a central stalk and a peripheral stalk. During catalysis, ATP synthesis in the catalytic domain of F(1) is coupled via a rotary mechanism of the central stalk subunits to proton translocation. Functionally, key component of the F(0) channel; it plays a direct role in translocation across the membrane. A homomeric c-ring of between 10-14 subunits forms the central stalk rotor element with the F(1) delta and epsilon subunits. In Carboxydothermus hydrogenoformans (strain ATCC BAA-161 / DSM 6008 / Z-2901), this protein is ATP synthase subunit c.